Reading from the N-terminus, the 760-residue chain is MRYNQFSYIPTSLERAAEELKELGFDLDLQKTAKANLESFLRKLFFHYPDSDYPLSHLIAKNDMDALSFFQSEQELSKEVFDLLALQVLGFIPGVDFTEADAFLDKLAFPIHFDETEIIKHIHHLLATRCKSGMTLIDDLVSQGMLTMDNDYHFFNGKSLATFDTSQLIREVVYVEAPLDTDQDGQLDLIKVNIIRPQSQKPLPTLMTPSPYHQGINEVANDKKLYRMEKELVVKKRRQITVEDRDFIPLETQPCKLPIGQNLESFSYINSYSLNDYFLARGFANIYVSGVGTAGSTGFMTSGDYAQIESFKAVIDWLNGRATAYTSHSKTHQVRADWANGLVCTTGKSYLGTMSTGLATTGVDGLAMIIAESAISSWYNYYRENGLVCSPGGYPGEDLDVLTELTYSRNLLAGDYLRHNDRYQELLNQQSQALDRQSGDYNQFWHDRNYLKNAHQIKCDVVYTHGLQDWNVKPRQVYEIFNALPSTINKHLFLHQGEHVYMHNRQSIDFRESMNALLCQKLLGLANDFSLPEMIWQDNTCPQNWQERKVFGTSTIKELDLGQELLLIDNHYGEDEFKAYGKDFRAFKAALFEGKANQALVDILLEEDLPINGEIVLQLKVKSSENKGLLSAQILDYGKKKRLGDLPIALTQSSIDNGQNFSRESLKELPFREDSYRVISKGFMNLQNRNNLSSIETIPNNKWMTVRLPLQPTIYHLEKGDTLRVILYTTDFEHTVRDNSNYALTIDLSQSQLIVPIASN.

Catalysis depends on charge relay system residues Ser349, Asp469, and His499.

Belongs to the peptidase S15 family. In terms of assembly, homodimer.

The protein localises to the cytoplasm. It catalyses the reaction Hydrolyzes Xaa-Pro-|- bonds to release unblocked, N-terminal dipeptides from substrates including Ala-Pro-|-p-nitroanilide and (sequentially) Tyr-Pro-|-Phe-Pro-|-Gly-Pro-|-Ile.. Functionally, removes N-terminal dipeptides sequentially from polypeptides having unsubstituted N-termini provided that the penultimate residue is proline. This chain is Xaa-Pro dipeptidyl-peptidase, found in Streptococcus pyogenes serotype M4 (strain MGAS10750).